An 87-amino-acid chain; its full sequence is UPF0250 protein SG0794 (87 aa).

It belongs to the UPF0250 family.

In Sodalis glossinidius (strain morsitans), this protein is UPF0250 protein SG0794.